The following is a 307-amino-acid chain: Agmatinase (307 aa).

The Mn(2+) site is built by His128, Asp151, His153, Asp155, Asp232, and Asp234.

It belongs to the arginase family. Agmatinase subfamily. Requires Mn(2+) as cofactor.

The enzyme catalyses agmatine + H2O = urea + putrescine. The protein operates within amine and polyamine biosynthesis; putrescine biosynthesis via agmatine pathway; putrescine from agmatine: step 1/1. In terms of biological role, catalyzes the formation of putrescine from agmatine. This is Agmatinase from Neisseria meningitidis serogroup A / serotype 4A (strain DSM 15465 / Z2491).